A 227-amino-acid polypeptide reads, in one-letter code: uncharacterized protein (227 aa).

Transmembrane regions (helical) follow at residues 17-37 (VGIK…GVFS), 79-99 (GFLF…IISI), 112-132 (LMTP…LALI), and 181-201 (VAVF…ILVF).

It is found in the cell membrane. This is an uncharacterized protein from Escherichia coli (strain K12).